The chain runs to 117 residues: Large ribosomal subunit protein bL19 (117 aa).

Belongs to the bacterial ribosomal protein bL19 family.

Its function is as follows. This protein is located at the 30S-50S ribosomal subunit interface and may play a role in the structure and function of the aminoacyl-tRNA binding site. This chain is Large ribosomal subunit protein bL19, found in Micrococcus luteus (strain ATCC 4698 / DSM 20030 / JCM 1464 / CCM 169 / CCUG 5858 / IAM 1056 / NBRC 3333 / NCIMB 9278 / NCTC 2665 / VKM Ac-2230) (Micrococcus lysodeikticus).